A 158-amino-acid polypeptide reads, in one-letter code: Transcriptional repressor NrdR (158 aa).

A zinc finger spans residues Cys3–Cys34. The ATP-cone domain maps to Ile49–Asp139.

The protein belongs to the NrdR family. Zn(2+) serves as cofactor.

In terms of biological role, negatively regulates transcription of bacterial ribonucleotide reductase nrd genes and operons by binding to NrdR-boxes. The sequence is that of Transcriptional repressor NrdR from Synechococcus sp. (strain CC9311).